The following is a 561-amino-acid chain: Potassium-transporting ATPase potassium-binding subunit (561 aa).

The next 10 helical transmembrane spans lie at 4–24 (IVMQ…PLGI), 65–85 (AVSV…VLML), 133–153 (IGLT…LFAV), 177–197 (LYIL…QGVV), 253–273 (FTNL…VVMF), 285–305 (AIMT…TISE), 380–400 (GLYG…LLVG), 417–437 (MVCL…AVAV), 484–504 (MVGA…ALYL), and 528–548 (FIGL…LPAL).

Belongs to the KdpA family. As to quaternary structure, the system is composed of three essential subunits: KdpA, KdpB and KdpC.

The protein resides in the cell membrane. Its function is as follows. Part of the high-affinity ATP-driven potassium transport (or Kdp) system, which catalyzes the hydrolysis of ATP coupled with the electrogenic transport of potassium into the cytoplasm. This subunit binds the extracellular potassium ions and delivers the ions to the membrane domain of KdpB through an intramembrane tunnel. The chain is Potassium-transporting ATPase potassium-binding subunit from Listeria monocytogenes serovar 1/2a (strain ATCC BAA-679 / EGD-e).